The chain runs to 1200 residues: DNA polymerase subunit gamma-1 (1200 aa).

Disordered regions lie at residues 471–515 and 667–688; these read QKKT…RPSM and MDLSSEVPATAKAKKRNNSSEH. The span at 472–481 shows a compositional bias: basic residues; the sequence is KKTKISKKQK. A compositionally biased stretch (basic and acidic residues) spans 494–512; it reads LVEDHNEDPGPPTEKEESR.

Belongs to the DNA polymerase type-A family. As to quaternary structure, heterotrimer composed of a catalytic subunit and a homodimer of accessory subunits. Mg(2+) serves as cofactor.

Its subcellular location is the mitochondrion. The protein localises to the mitochondrion matrix. It is found in the mitochondrion nucleoid. It carries out the reaction DNA(n) + a 2'-deoxyribonucleoside 5'-triphosphate = DNA(n+1) + diphosphate. Involved in the replication of mitochondrial DNA. Associates with mitochondrial DNA. The protein is DNA polymerase subunit gamma-1 (polg) of Xenopus laevis (African clawed frog).